A 64-amino-acid chain; its full sequence is Alpha-conotoxin GI (64 aa).

Positions 1 to 21 (MGMRMMFTVFLLVVLATTVVS) are cleaved as a signal peptide. Positions 22–49 (FPSERASDGRDDTAKDEGSDMDKLVEKK) are excised as a propeptide. Intrachain disulfides connect cysteine 51–cysteine 56 and cysteine 52–cysteine 62. Cysteine 62 is subject to Cysteine amide.

It belongs to the conotoxin A superfamily. In terms of processing, not hydroxylated; hydroxylation, on a synthetic hydroxylated GI, improves its folding but impairs its activity against target receptors. As to expression, expressed by the venom duct.

It localises to the secreted. In terms of biological role, alpha-conotoxins act on postsynaptic membranes, they bind to the nicotinic acetylcholine receptors (nAChR) and thus inhibit them. Reversibly inhibits mammalian muscle nAChR (IC(50)=339 nM on adult subtype (alpha-1-beta-1-gamma-delta/CHRNA1-CHRNB1-CHRNG-CHRND) and IC(50)=5.86-995 nM on fetal subtype (alpha-1-beta-1-delta-epsilon/CHRNA1-CHRNB1-CHRND-CHRNE)). The higher affinity site is the alpha/delta site on mouse muscle-derived BC3H-1 receptor, and the other site (alpha/gamma site) on nicotinic receptors from Torpedo californica electric organ. The protein is Alpha-conotoxin GI of Conus geographus (Geography cone).